The following is a 670-amino-acid chain: FAD-binding monooxygenase ausC (670 aa).

Residues 144–147, 156–157, and Tyr162 each bind FAD; these read TWYW and DT. 154–156 provides a ligand contact to NADP(+); sequence MCD. Residues 299–305 and 322–323 contribute to the NADP(+) site; these read TGASAVQ and RT.

Belongs to the FAD-binding monooxygenase family. FAD is required as a cofactor.

The enzyme catalyses preaustinoid A + AH2 + O2 = preaustinoid A1 + A + H2O. It participates in secondary metabolite biosynthesis; terpenoid biosynthesis. Its function is as follows. FAD-binding monooxygenase; part of the gene cluster that mediates the biosynthesis of calidodehydroaustin, a fungal meroterpenoid. The first step of the pathway is the synthesis of 3,5-dimethylorsellinic acid by the polyketide synthase ausA. 3,5-dimethylorsellinic acid is then prenylated by the polyprenyl transferase ausN. Further epoxidation by the FAD-dependent monooxygenase ausM and cyclization by the probable terpene cyclase ausL lead to the formation of protoaustinoid A. Protoaustinoid A is then oxidized to spiro-lactone preaustinoid A3 by the combined action of the FAD-binding monooxygenases ausB and ausC, and the dioxygenase ausE. Acid-catalyzed keto-rearrangement and ring contraction of the tetraketide portion of preaustinoid A3 by ausJ lead to the formation of preaustinoid A4. The aldo-keto reductase ausK, with the help of ausH, is involved in the next step by transforming preaustinoid A4 into isoaustinone which is in turn hydroxylated by the P450 monooxygenase ausI to form austinolide. The cytochrome P450 monooxygenase ausG modifies austinolide to austinol. Austinol is further acetylated to austin by the O-acetyltransferase ausP, which spontaneously changes to dehydroaustin. The cytochrome P450 monooxygenase ausR then converts dehydroaustin is into 7-dehydrodehydroaustin. The hydroxylation catalyzed by ausR permits the O-acetyltransferase ausQ to add an additional acetyl group to the molecule, leading to the formation of acetoxydehydroaustin. The short chain dehydrogenase ausT catalyzes the reduction of the double bond present between carbon atoms 1 and 2 to convert 7-dehydrodehydroaustin into 1,2-dihydro-7-hydroxydehydroaustin. AusQ catalyzes not only an acetylation reaction but also the addition of the PKS ausV diketide product to 1,2-dihydro-7-hydroxydehydroaustin, forming precalidodehydroaustin. Finally, the iron/alpha-ketoglutarate-dependent dioxygenase converts precalidodehydroaustin into calidodehydroaustin. This Aspergillus calidoustus protein is FAD-binding monooxygenase ausC.